A 243-amino-acid chain; its full sequence is PF03932 family protein CutC (243 aa).

The protein belongs to the CutC family.

The protein localises to the cytoplasm. The sequence is that of PF03932 family protein CutC from Histophilus somni (strain 2336) (Haemophilus somnus).